The primary structure comprises 274 residues: MRKSILSFLEKKGKNEKITMVSAYDYHSAKILDNCDIDIILVGDSLAMTVLGMQDTLSVTMDEMLIFTKAVSRGAKKSFVLADMPFMSYQSSDRDAILNASRFIKESHANGVKVEGGIEIASKIKLISQSGIPVVAHLGLTPQAVNMLGGYRVQGKDLQSAQKIIDDAKAVQDAGACMLVLECVPVKLAQKISSILEIPTIGIGSGKYCDGQVLVYHDLLGLNKDFKAKFVKHFDKIDPQVGVEKYRDEVKSGIFPSEEHSFDYLDDELLDKLY.

The Mg(2+) site is built by D44 and D83. Residues 44–45 (DS), D83, and K113 each bind 3-methyl-2-oxobutanoate. E115 contributes to the Mg(2+) binding site. E182 functions as the Proton acceptor in the catalytic mechanism.

This sequence belongs to the PanB family. As to quaternary structure, homodecamer; pentamer of dimers. Requires Mg(2+) as cofactor.

It is found in the cytoplasm. It carries out the reaction 3-methyl-2-oxobutanoate + (6R)-5,10-methylene-5,6,7,8-tetrahydrofolate + H2O = 2-dehydropantoate + (6S)-5,6,7,8-tetrahydrofolate. It participates in cofactor biosynthesis; (R)-pantothenate biosynthesis; (R)-pantoate from 3-methyl-2-oxobutanoate: step 1/2. Functionally, catalyzes the reversible reaction in which hydroxymethyl group from 5,10-methylenetetrahydrofolate is transferred onto alpha-ketoisovalerate to form ketopantoate. The polypeptide is 3-methyl-2-oxobutanoate hydroxymethyltransferase (Campylobacter jejuni (strain RM1221)).